A 473-amino-acid polypeptide reads, in one-letter code: Glutamate--tRNA ligase 1 (473 aa).

A 'HIGH' region motif is present at residues 10 to 20 (PSPTGFLHIGG). A 'KMSKS' region motif is present at residues 252-256 (KLSKR). An ATP-binding site is contributed by Lys-255.

Belongs to the class-I aminoacyl-tRNA synthetase family. Glutamate--tRNA ligase type 1 subfamily. In terms of assembly, monomer.

The protein resides in the cytoplasm. The enzyme catalyses tRNA(Glu) + L-glutamate + ATP = L-glutamyl-tRNA(Glu) + AMP + diphosphate. Functionally, catalyzes the attachment of glutamate to tRNA(Glu) in a two-step reaction: glutamate is first activated by ATP to form Glu-AMP and then transferred to the acceptor end of tRNA(Glu). In Wolbachia pipientis wMel, this protein is Glutamate--tRNA ligase 1.